The chain runs to 316 residues: Secreted effector protein SifB (316 aa).

Belongs to the Sif family.

The protein localises to the secreted. It is found in the host cytoplasm. Effector proteins function to alter host cell physiology and promote bacterial survival in host tissues. The polypeptide is Secreted effector protein SifB (sifB) (Salmonella typhimurium (strain LT2 / SGSC1412 / ATCC 700720)).